Here is a 283-residue protein sequence, read N- to C-terminus: Ribosomal RNA small subunit methyltransferase A (283 aa).

Asn13, Leu15, Gly39, Glu59, Asp87, and Asn108 together coordinate S-adenosyl-L-methionine.

This sequence belongs to the class I-like SAM-binding methyltransferase superfamily. rRNA adenine N(6)-methyltransferase family. RsmA subfamily.

The protein resides in the cytoplasm. The catalysed reaction is adenosine(1518)/adenosine(1519) in 16S rRNA + 4 S-adenosyl-L-methionine = N(6)-dimethyladenosine(1518)/N(6)-dimethyladenosine(1519) in 16S rRNA + 4 S-adenosyl-L-homocysteine + 4 H(+). Functionally, specifically dimethylates two adjacent adenosines (A1518 and A1519) in the loop of a conserved hairpin near the 3'-end of 16S rRNA in the 30S particle. May play a critical role in biogenesis of 30S subunits. The sequence is that of Ribosomal RNA small subunit methyltransferase A from Helicobacter hepaticus (strain ATCC 51449 / 3B1).